The following is a 392-amino-acid chain: UPF0229 protein CPF_1540 (392 aa).

Residues 75–100 (VTTGTGEERRGDRISSDKRKAISNNK) form a disordered region. Residues 80 to 94 (GEERRGDRISSDKRK) are compositionally biased toward basic and acidic residues.

The protein belongs to the UPF0229 family.

The protein is UPF0229 protein CPF_1540 of Clostridium perfringens (strain ATCC 13124 / DSM 756 / JCM 1290 / NCIMB 6125 / NCTC 8237 / Type A).